A 180-amino-acid chain; its full sequence is Homeobox protein ceh-12 (180 aa).

A disordered region spans residues 15-37; the sequence is SSQNEDQKLESHPSPPSQIPNYS. A DNA-binding region (homeobox) is located at residues 110 to 169; that stretch reads MRRPRTAFSSEQLVQLEKQFSDNRYLSRPRRYQLAQQLSLSETQIKIWFQNRRMKNKRCP.

In terms of tissue distribution, expressed in VB motor neurons in the ventral nerve cord.

It is found in the nucleus. Transcription factor. Plays a role, downstream from homeobox protein unc-4 and Wnt signaling, in specifying synaptic inputs to A-class motor neurons. Involved in patterning of the synaptic outputs of the postmitotic DA class cholinergic motor neurons. This chain is Homeobox protein ceh-12 (ceh-12), found in Caenorhabditis elegans.